The sequence spans 1461 residues: Formin-3 (1461 aa).

Disordered regions lie at residues 1 to 67 and 431 to 457; these read MASK…SDDN and YREE…RPTT. The span at 12 to 28 shows a compositional bias: low complexity; sequence TSRSIQSRNSSYSTSSN. Composition is skewed to polar residues over residues 29–53 and 438–457; these read ERIG…STND and PHGN…RPTT. Residues 92 to 508 enclose the GBD/FH3 domain; the sequence is SETEQLRKIY…KIQKSMQLLT (417 aa). The tract at residues 137–515 is interaction with tea4; sequence QHTVLDEATY…LLTHTLEALE (379 aa). The stretch at 540 to 639 forms a coiled coil; that stretch reads GTAEEIAEYK…VQNSNEQHLQ (100 aa). The segment at 683–811 is disordered; that stretch reads GIPVRVHTPS…EPKIDETSLT (129 aa). Positions 700 to 718 are enriched in low complexity; the sequence is SFSGSEISSSPSPLLPDVS. Residues 731-784 show a composition bias toward pro residues; the sequence is SPPPPPPAVIVPTPAPAPIPVPPPAPIMGGPPPPPPPPGVAGAGPPPPPPPPPA. The span at 801-811 shows a compositional bias: basic and acidic residues; it reads PEPKIDETSLT. The region spanning 845 to 1257 is the FH2 domain; it reads LRDLHKPTRP…RIMSEDRDKL (413 aa). Disordered regions lie at residues 1268-1337 and 1416-1461; these read AKYR…AEEK and ERLQ…RQKQ. Basic and acidic residues-rich tracts occupy residues 1273 to 1315 and 1325 to 1337; these read KREL…KTGD and MEDL…AEEK. The segment covering 1445–1454 has biased composition (polar residues); that stretch reads TNGSNASNLV.

The protein belongs to the formin homology family. In terms of assembly, interacts with rax2, rho3 and tea4. Interacts with tea1 in the presence of tea4.

It localises to the cytoplasm. The protein resides in the cell cortex. It is found in the cell tip. Its function is as follows. Involved in controlling polarized cell growth. Required for interphase actin cable formation and microtubule organization. The protein is Formin-3 (for3) of Schizosaccharomyces pombe (strain 972 / ATCC 24843) (Fission yeast).